Reading from the N-terminus, the 261-residue chain is Ribonuclease HII (261 aa).

The RNase H type-2 domain maps to 71-259; sequence QYIAGVDEVG…VKEAKLHFES (189 aa). 3 residues coordinate a divalent metal cation: Asp77, Glu78, and Asp169.

Belongs to the RNase HII family. The cofactor is Mn(2+). Mg(2+) is required as a cofactor.

The protein localises to the cytoplasm. It catalyses the reaction Endonucleolytic cleavage to 5'-phosphomonoester.. Its function is as follows. Endonuclease that specifically degrades the RNA of RNA-DNA hybrids. The sequence is that of Ribonuclease HII from Listeria innocua serovar 6a (strain ATCC BAA-680 / CLIP 11262).